We begin with the raw amino-acid sequence, 101 residues long: Small ribosomal subunit protein uS17 (101 aa).

The protein belongs to the universal ribosomal protein uS17 family. Part of the 30S ribosomal subunit.

Its function is as follows. One of the primary rRNA binding proteins, it binds specifically to the 5'-end of 16S ribosomal RNA. This Kosmotoga olearia (strain ATCC BAA-1733 / DSM 21960 / TBF 19.5.1) protein is Small ribosomal subunit protein uS17.